The chain runs to 344 residues: Heat-inducible transcription repressor HrcA (344 aa).

Belongs to the HrcA family.

Functionally, negative regulator of class I heat shock genes (grpE-dnaK-dnaJ and groELS operons). Prevents heat-shock induction of these operons. The polypeptide is Heat-inducible transcription repressor HrcA (Streptococcus pneumoniae (strain 70585)).